The chain runs to 332 residues: Methylthioribose-1-phosphate isomerase (332 aa).

Substrate contacts are provided by residues 44–46 (RGA), Arg87, and Gln192. The active-site Proton donor is the Asp233. A substrate-binding site is contributed by 243–244 (NK).

Belongs to the eIF-2B alpha/beta/delta subunits family. MtnA subfamily.

The enzyme catalyses 5-(methylsulfanyl)-alpha-D-ribose 1-phosphate = 5-(methylsulfanyl)-D-ribulose 1-phosphate. It functions in the pathway amino-acid biosynthesis; L-methionine biosynthesis via salvage pathway; L-methionine from S-methyl-5-thio-alpha-D-ribose 1-phosphate: step 1/6. Functionally, catalyzes the interconversion of methylthioribose-1-phosphate (MTR-1-P) into methylthioribulose-1-phosphate (MTRu-1-P). The chain is Methylthioribose-1-phosphate isomerase from Dehalococcoides mccartyi (strain ATCC BAA-2100 / JCM 16839 / KCTC 5957 / BAV1).